A 134-amino-acid polypeptide reads, in one-letter code: Small ribosomal subunit protein uS11 (134 aa).

It belongs to the universal ribosomal protein uS11 family. As to quaternary structure, part of the 30S ribosomal subunit. Interacts with proteins S7 and S18. Binds to IF-3.

Located on the platform of the 30S subunit, it bridges several disparate RNA helices of the 16S rRNA. Forms part of the Shine-Dalgarno cleft in the 70S ribosome. The chain is Small ribosomal subunit protein uS11 from Leptothrix cholodnii (strain ATCC 51168 / LMG 8142 / SP-6) (Leptothrix discophora (strain SP-6)).